Reading from the N-terminus, the 284-residue chain is tRNA pseudouridine synthase A (284 aa).

The active-site Nucleophile is the Asp62. Tyr123 lines the substrate pocket.

Belongs to the tRNA pseudouridine synthase TruA family. In terms of assembly, homodimer.

The enzyme catalyses uridine(38/39/40) in tRNA = pseudouridine(38/39/40) in tRNA. In terms of biological role, formation of pseudouridine at positions 38, 39 and 40 in the anticodon stem and loop of transfer RNAs. The polypeptide is tRNA pseudouridine synthase A (Streptomyces griseus subsp. griseus (strain JCM 4626 / CBS 651.72 / NBRC 13350 / KCC S-0626 / ISP 5235)).